The chain runs to 215 residues: Redox-sensing transcriptional repressor Rex 2 (215 aa).

The segment at residues 15-54 (VYLRYLKMLGDSGVKRIKSREFSEMIQIPSATIRRDFSHV) is a DNA-binding region (H-T-H motif). 89–94 (GCGNLG) lines the NAD(+) pocket.

Belongs to the transcriptional regulatory Rex family. Homodimer.

It is found in the cytoplasm. Modulates transcription in response to changes in cellular NADH/NAD(+) redox state. The chain is Redox-sensing transcriptional repressor Rex 2 from Enterococcus faecalis (strain ATCC 700802 / V583).